The primary structure comprises 244 residues: Venom nerve growth factor 1 (244 aa).

Positions 1 to 18 are cleaved as a signal peptide; the sequence is MSMLCYTLIIAFLIGIWA. A propeptide spanning residues 19–125 is cleaved from the precursor; it reads APKSEDNVPL…TLNRNIRAKR (107 aa). Positions 47 to 66 are enriched in basic and acidic residues; sequence GLKTSRNTDQRHPAPKKAED. The segment at 47–67 is disordered; the sequence is GLKTSRNTDQRHPAPKKAEDQ. Intrachain disulfides connect cysteine 139-cysteine 205, cysteine 181-cysteine 233, and cysteine 193-cysteine 235.

This sequence belongs to the NGF-beta family. As to quaternary structure, homodimer; non-covalently linked. As to expression, expressed by the venom gland.

Its subcellular location is the secreted. Functionally, nerve growth factor is important for the development and maintenance of the sympathetic and sensory nervous systems. It stimulates division and differentiation of sympathetic and embryonic sensory neurons as well as basal forebrain cholinergic neurons in the brain. Its relevance in the snake venom is not clear. However, it has been shown to inhibit metalloproteinase-dependent proteolysis of platelet glycoprotein Ib alpha, suggesting a metalloproteinase inhibition to prevent metalloprotease autodigestion and/or protection against prey proteases. Binds a lipid between the two protein chains in the homodimer. The lipid-bound form promotes histamine relase from mouse mast cells, contrary to the lipid-free form. In Notechis scutatus scutatus (Mainland tiger snake), this protein is Venom nerve growth factor 1.